The primary structure comprises 209 residues: Uracil phosphoribosyltransferase (209 aa).

Residues R79, R104, and 131 to 139 (DPMLATGGS) each bind 5-phospho-alpha-D-ribose 1-diphosphate. Residues I194 and 199–201 (GDA) each bind uracil. D200 provides a ligand contact to 5-phospho-alpha-D-ribose 1-diphosphate.

This sequence belongs to the UPRTase family. The cofactor is Mg(2+).

It carries out the reaction UMP + diphosphate = 5-phospho-alpha-D-ribose 1-diphosphate + uracil. The protein operates within pyrimidine metabolism; UMP biosynthesis via salvage pathway; UMP from uracil: step 1/1. With respect to regulation, allosterically activated by GTP. Catalyzes the conversion of uracil and 5-phospho-alpha-D-ribose 1-diphosphate (PRPP) to UMP and diphosphate. This Finegoldia magna (strain ATCC 29328 / DSM 20472 / WAL 2508) (Peptostreptococcus magnus) protein is Uracil phosphoribosyltransferase.